The chain runs to 331 residues: UPF0194 membrane protein YbhG (331 aa).

Positions 1-19 (MKKPVVIGLAIAAIVAVIA) are cleaved as a signal peptide. Positions 107–208 (EEIAQAAAAV…LDLQDTTLIA (102 aa)) form a coiled coil.

It belongs to the UPF0194 family.

It localises to the periplasm. The protein is UPF0194 membrane protein YbhG of Salmonella agona (strain SL483).